The sequence spans 571 residues: Protein E6 homolog (571 aa).

The protein belongs to the chordopoxvirinae E6 family.

Its subcellular location is the virion. In terms of biological role, late protein which may play a role in the virion morphogenesis and have therefore an indirect role on viral transcription ability. This Vertebrata (FPV) protein is Protein E6 homolog.